A 994-amino-acid chain; its full sequence is NACHT, LRR and PYD domains-containing protein 4 (994 aa).

The 94-residue stretch at 1-94 (MAASFFSDFG…CMKVMRERTG (94 aa)) folds into the Pyrin domain. Residues 149–472 (RTVIIQGPQG…FYLLKSHLDH (324 aa)) enclose the NACHT domain. Residue 155–162 (GPQGIGKT) coordinates ATP. LRR repeat units lie at residues 637–660 (SGHLRELQVQDSTLSESTFVTWCN), 698–721 (YLSFTLTKLSRDDIRSLCDALNYP), 722–745 (AGNVKELALVNCHLSPIDCEVLAG), 750–777 (NKKLTYLNVSCNQLDTGVPLLCEALCSP), 806–833 (NKSVRYLDLSANVLKDEGLKTLCEALKH), 863–886 (NQNLKILQIGCNEIGDVGVQLLCR), 920–943 (SKTLQQLNLTLNTLDHTGVVVLCE), and 949–972 (ECALQVLGLRKTDFDEETQALLTA).

It belongs to the NLRP family. Interacts with CHUK/IKKA, inhibiting its kinase activity.

Its function is as follows. May be involved in inflammation and recognition of cytosolic pathogen-associated molecular patterns (PAMPs) not intercepted by membrane-bound receptors. Acts as a negative regulator of the type I interferon signaling pathway by serving as an adapter to promote DTX4-mediated ubiquitination of activated TBK1, and its subsequent degradation. Suppresses NF-kappaB induction by the cytokines TNFA and IL1B, suggesting that it operates at a point of convergence in these two cytokine signaling pathways. This is NACHT, LRR and PYD domains-containing protein 4 from Homo sapiens (Human).